Consider the following 525-residue polypeptide: Protein-serine O-palmitoleoyltransferase porcupine (525 aa).

Transmembrane regions (helical) follow at residues 83–103, 125–145, 159–179, 220–240, 260–280, 301–318, 395–415, 467–487, and 505–525; these read VMQYVAPMLLLCLLCRLLCLL, LIILQITVGYRLLLLLLLAAV, GAQVLAVLTVGSQFLYELLIW, FAYLGYIYSPATCALGPWVSF, LLPNVVICVLAVTVSNCVAPA, VRSSHYFVGMMAQALLVA, SLLHGMDLRIYLVLISLAFLA, NLAFTALAIFHLAYLGVVLLG, and QAGYLSHYIGLGTFVLYLFIS. Residue H398 is part of the active site.

This sequence belongs to the membrane-bound acyltransferase family. Porcupine subfamily. As to quaternary structure, interacts with wg and Wnt5.

It localises to the endoplasmic reticulum membrane. The catalysed reaction is [Wnt protein]-L-serine + (9Z)-hexadecenoyl-CoA = [Wnt protein]-O-(9Z)-hexadecenoyl-L-serine + CoA. Its function is as follows. Protein-serine O-palmitoleoyltransferase that acts as a key regulator of the Wnt signaling pathway by mediating the attachment of palmitoleate, a 16-carbon monounsaturated fatty acid (C16:1(9Z)), to Wnt proteins. Serine palmitoleoylation of Wnt proteins is required for efficient binding to frizzled receptors. Also facilitates the glycosylation of Wnt family members, including wg and Wnt5. The cotranslational disulfide bond formation of wg competes with the N-glycosylation. Porc stimulates the post-translational N-glycosylation by anchoring wg at the ER membrane, probably through acylation. In Drosophila melanogaster (Fruit fly), this protein is Protein-serine O-palmitoleoyltransferase porcupine.